The chain runs to 399 residues: Subtilisin-like protease 4 (399 aa).

A signal peptide spans 1 to 19; it reads MVCLKTLSVFLAAFAVADA. A propeptide spanning residues 20–118 is cleaved from the precursor; the sequence is RAVFKTQSNK…VEQDQVVRIS (99 aa). The 80-residue stretch at 38-117 folds into the Inhibitor I9 domain; sequence YIVVMKDGVS…YVEQDQVVRI (80 aa). The 272-residue stretch at 128–399 folds into the Peptidase S8 domain; it reads SWGLGRVSHR…NRLLYNGSGQ (272 aa). Active-site charge relay system residues include Asp160 and His191. N-linked (GlcNAc...) asparagine glycosylation occurs at Asn252. Ser346 functions as the Charge relay system in the catalytic mechanism. The segment covering 380–392 has biased composition (polar residues); the sequence is AISNPGSGTTNRL. The tract at residues 380-399 is disordered; the sequence is AISNPGSGTTNRLLYNGSGQ. Asn395 carries N-linked (GlcNAc...) asparagine glycosylation.

The protein belongs to the peptidase S8 family.

It is found in the secreted. In terms of biological role, secreted subtilisin-like serine protease with keratinolytic activity that contributes to pathogenicity. In Arthroderma gypseum (strain ATCC MYA-4604 / CBS 118893) (Microsporum gypseum), this protein is Subtilisin-like protease 4 (SUB4).